Here is a 636-residue protein sequence, read N- to C-terminus: Sodium-dependent proline transporter (636 aa).

At 1–45 the chain is on the cytoplasmic side; it reads MKKLQGAHLRKPVTPDLLMTPSDQGDVDLDVDFAAHRGNWTGKLD. Thr20 bears the Phosphothreonine mark. At Ser22 the chain carries Phosphoserine. Transmembrane regions (helical) follow at residues 46–66, 74–93, and 117–137; these read FLLSCIGYCVGLGNVWRFPYR, AFLVPYFLMLAICGIPLFFL, and GAGAAMLLIVGLVAIYYNMII. Topologically, residues 138–214 are extracellular; the sequence is AYVLFYLFAS…QGIGSPGEIR (77 aa). An N-linked (GlcNAc...) asparagine glycan is attached at Asn182. Helical transmembrane passes span 215–233, 242–259, 295–312, 324–345, 378–397, 425–443, 459–479, 500–519, and 538–556; these read WNLCLCLLLAWVIVFLCIL, VVYFTATFPYLILLMLLV, IFYSLGVGFGGLLTFASY, FIVTLGNAITSILAGFAIFSVL, LPLSPFWSFLFFFMLLTLGL, VFSGLICVAMYLMGLILTT, SFGLMVVVITTCLAVTRVYGI, ACWLFLSPATLLALMVYSIV, and LGILMGLLSCLMIPAGMLV. At 557-636 the chain is on the cytoplasmic side; that stretch reads AVLREEGSLW…EIAEEEESMM (80 aa). Phosphoserine is present on residues Ser573 and Ser582. At Thr588 the chain carries Phosphothreonine. Residue Tyr591 is modified to Phosphotyrosine. A phosphoserine mark is found at Ser598 and Ser600.

This sequence belongs to the sodium:neurotransmitter symporter (SNF) (TC 2.A.22) family. SLC6A7 subfamily. In terms of tissue distribution, brain specific (at protein level). Highly expressed in hippocampus, corpus striatum and temporal cortex. Also expressed in frontal cortex, occipital cortex and, at lower levels, in cerebellum and parietal cortex (at protein level).

The protein resides in the synaptic cell membrane. It carries out the reaction L-proline(out) + chloride(out) + 2 Na(+)(out) = L-proline(in) + chloride(in) + 2 Na(+)(in). The catalysed reaction is L-pipecolate(out) + chloride(out) + 2 Na(+)(out) = L-pipecolate(in) + chloride(in) + 2 Na(+)(in). Functionally, brain specific sodium (and chloride)-dependent proline transporter. Terminates the action of proline by its high affinity sodium-dependent reuptake into presynaptic terminals. The chain is Sodium-dependent proline transporter from Homo sapiens (Human).